The sequence spans 329 residues: Minor capsid protein A1 (329 aa).

It localises to the virion. In terms of biological role, minor capsid protein. This Escherichia coli (Bacteriophage Q-beta) protein is Minor capsid protein A1.